A 334-amino-acid polypeptide reads, in one-letter code: Leukocyte cell-derived chemotaxin 1 (334 aa).

A helical membrane pass occupies residues 46–66; the sequence is VVLISGAVLLLFGAIGAFYFW. One can recognise a BRICHOS domain in the interval 105-201; the sequence is GSGAEEAIEV…LCGDLPIFWL (97 aa). The cysteines at positions 132 and 193 are disulfide-linked. The propeptide occupies 211–214; sequence RERR. A disordered region spans residues 212 to 270; the sequence is ERREVVRNSAPSTTRRPHSEPRGNAGPGRLSNGTRPNVQDDAEPFNPDNPYHQQEGESM. N-linked (GlcNAc...) asparagine glycosylation occurs at asparagine 243. 4 disulfide bridges follow: cysteine 282-cysteine 286, cysteine 283-cysteine 323, cysteine 293-cysteine 317, and cysteine 297-cysteine 313.

This sequence belongs to the chondromodulin-1 family. Post-translationally, after cleavage, the post-translationally modified ChM-I is secreted as a glycoprotein. As to expression, detected in the four cardiac valves, valvular interstitial cells and extracellular matrix (at protein level).

It localises to the secreted. It is found in the extracellular space. The protein resides in the extracellular matrix. The protein localises to the endomembrane system. Bifunctional growth regulator that stimulates the growth of cultured chondrocytes in the presence of basic fibroblast growth factor (FGF) but inhibits the growth of cultured vascular endothelial cells. May contribute to the rapid growth of cartilage and vascular invasion prior to the replacement of cartilage by bone during endochondral bone development. Inhibits in vitro tube formation and mobilization of endothelial cells. Plays a role as antiangiogenic factor in cardiac valves to suppress neovascularization. The sequence is that of Leukocyte cell-derived chemotaxin 1 from Mus musculus (Mouse).